A 426-amino-acid polypeptide reads, in one-letter code: 3-phosphoshikimate 1-carboxyvinyltransferase (426 aa).

3-phosphoshikimate-binding residues include lysine 22, serine 23, and arginine 27. Lysine 22 contacts phosphoenolpyruvate. Positions 96 and 124 each coordinate phosphoenolpyruvate. Residues serine 170, serine 171, glutamine 172, serine 198, aspartate 314, asparagine 337, and lysine 341 each contribute to the 3-phosphoshikimate site. Glutamine 172 contributes to the phosphoenolpyruvate binding site. The active-site Proton acceptor is aspartate 314. Positions 345, 387, and 412 each coordinate phosphoenolpyruvate.

The protein belongs to the EPSP synthase family. As to quaternary structure, monomer.

It localises to the cytoplasm. It catalyses the reaction 3-phosphoshikimate + phosphoenolpyruvate = 5-O-(1-carboxyvinyl)-3-phosphoshikimate + phosphate. It functions in the pathway metabolic intermediate biosynthesis; chorismate biosynthesis; chorismate from D-erythrose 4-phosphate and phosphoenolpyruvate: step 6/7. Functionally, catalyzes the transfer of the enolpyruvyl moiety of phosphoenolpyruvate (PEP) to the 5-hydroxyl of shikimate-3-phosphate (S3P) to produce enolpyruvyl shikimate-3-phosphate and inorganic phosphate. The protein is 3-phosphoshikimate 1-carboxyvinyltransferase of Colwellia psychrerythraea (strain 34H / ATCC BAA-681) (Vibrio psychroerythus).